The primary structure comprises 353 residues: BLOC-1-related complex subunit 6 (353 aa).

The interval 23 to 194 (AIFGDGPGQT…SGAGGGRRAT (172 aa)) is disordered. The span at 102 to 126 (FDLHGSSRRKDPEPPEAKPESERVC) shows a compositional bias: basic and acidic residues. Phosphoserine occurs at positions 130 and 166. Positions 172 to 191 (GACGGPASSGGAESGAGGGR) are enriched in gly residues. Residue Thr-194 is modified to Phosphothreonine. Residue Ser-197 is modified to Phosphoserine. Residues 225 to 253 (LSGAPQPPPPAPTRPCSAPTPTPAIPPID) form a disordered region. Positions 229-253 (PQPPPPAPTRPCSAPTPTPAIPPID) are enriched in pro residues.

It belongs to the BORCS6 family. Component of the BLOC-one-related complex (BORC) which is composed of BLOC1S1, BLOC1S2, BORCS5, BORCS6, BORCS7, BORCS8, KXD1 and SNAPIN.

It localises to the lysosome membrane. Its function is as follows. As part of the BORC complex may play a role in lysosomes movement and localization at the cell periphery. Associated with the cytosolic face of lysosomes, the BORC complex may recruit ARL8B and couple lysosomes to microtubule plus-end-directed kinesin motor. This is BLOC-1-related complex subunit 6 from Bos taurus (Bovine).